The sequence spans 154 residues: MPKKKSPGTLAENRKARHDYNIEDTIEAGIVLQGTEIKSIRRGSANLKDSYAQVNRGEMFLNNMHIAPYEEGNRFNHDPRRSRKLLLHKREIAKLGERTREVGYSIVPLKLYLKHGHCKVLLGVARGKKKYDKRQALKEKAVQRDVAREMKARY.

It belongs to the SmpB family.

It is found in the cytoplasm. In terms of biological role, required for rescue of stalled ribosomes mediated by trans-translation. Binds to transfer-messenger RNA (tmRNA), required for stable association of tmRNA with ribosomes. tmRNA and SmpB together mimic tRNA shape, replacing the anticodon stem-loop with SmpB. tmRNA is encoded by the ssrA gene; the 2 termini fold to resemble tRNA(Ala) and it encodes a 'tag peptide', a short internal open reading frame. During trans-translation Ala-aminoacylated tmRNA acts like a tRNA, entering the A-site of stalled ribosomes, displacing the stalled mRNA. The ribosome then switches to translate the ORF on the tmRNA; the nascent peptide is terminated with the 'tag peptide' encoded by the tmRNA and targeted for degradation. The ribosome is freed to recommence translation, which seems to be the essential function of trans-translation. This Staphylococcus saprophyticus subsp. saprophyticus (strain ATCC 15305 / DSM 20229 / NCIMB 8711 / NCTC 7292 / S-41) protein is SsrA-binding protein.